A 273-amino-acid chain; its full sequence is Hydroxyethylthiazole kinase (273 aa).

Substrate is bound at residue M41. Residues R117 and T170 each coordinate ATP. G197 serves as a coordination point for substrate.

This sequence belongs to the Thz kinase family. Mg(2+) serves as cofactor.

It catalyses the reaction 5-(2-hydroxyethyl)-4-methylthiazole + ATP = 4-methyl-5-(2-phosphooxyethyl)-thiazole + ADP + H(+). Its pathway is cofactor biosynthesis; thiamine diphosphate biosynthesis; 4-methyl-5-(2-phosphoethyl)-thiazole from 5-(2-hydroxyethyl)-4-methylthiazole: step 1/1. Its function is as follows. Catalyzes the phosphorylation of the hydroxyl group of 4-methyl-5-beta-hydroxyethylthiazole (THZ). This Clostridium acetobutylicum (strain ATCC 824 / DSM 792 / JCM 1419 / IAM 19013 / LMG 5710 / NBRC 13948 / NRRL B-527 / VKM B-1787 / 2291 / W) protein is Hydroxyethylthiazole kinase.